A 214-amino-acid chain; its full sequence is Probable transaldolase (214 aa).

Catalysis depends on K83, which acts as the Schiff-base intermediate with substrate.

This sequence belongs to the transaldolase family. Type 3B subfamily.

The protein resides in the cytoplasm. The enzyme catalyses D-sedoheptulose 7-phosphate + D-glyceraldehyde 3-phosphate = D-erythrose 4-phosphate + beta-D-fructose 6-phosphate. It participates in carbohydrate degradation; pentose phosphate pathway; D-glyceraldehyde 3-phosphate and beta-D-fructose 6-phosphate from D-ribose 5-phosphate and D-xylulose 5-phosphate (non-oxidative stage): step 2/3. Functionally, transaldolase is important for the balance of metabolites in the pentose-phosphate pathway. The protein is Probable transaldolase of Clostridium botulinum (strain Alaska E43 / Type E3).